A 367-amino-acid polypeptide reads, in one-letter code: UDP-N-acetylglucosamine--N-acetylmuramyl-(pentapeptide) pyrophosphoryl-undecaprenol N-acetylglucosamine transferase (367 aa).

UDP-N-acetyl-alpha-D-glucosamine-binding positions include 18 to 20 (TGG), N130, R170, S196, I252, 271 to 276 (ALTVSE), and Q297.

Belongs to the glycosyltransferase 28 family. MurG subfamily.

The protein localises to the cell inner membrane. The catalysed reaction is di-trans,octa-cis-undecaprenyl diphospho-N-acetyl-alpha-D-muramoyl-L-alanyl-D-glutamyl-meso-2,6-diaminopimeloyl-D-alanyl-D-alanine + UDP-N-acetyl-alpha-D-glucosamine = di-trans,octa-cis-undecaprenyl diphospho-[N-acetyl-alpha-D-glucosaminyl-(1-&gt;4)]-N-acetyl-alpha-D-muramoyl-L-alanyl-D-glutamyl-meso-2,6-diaminopimeloyl-D-alanyl-D-alanine + UDP + H(+). Its pathway is cell wall biogenesis; peptidoglycan biosynthesis. Cell wall formation. Catalyzes the transfer of a GlcNAc subunit on undecaprenyl-pyrophosphoryl-MurNAc-pentapeptide (lipid intermediate I) to form undecaprenyl-pyrophosphoryl-MurNAc-(pentapeptide)GlcNAc (lipid intermediate II). This Shewanella frigidimarina (strain NCIMB 400) protein is UDP-N-acetylglucosamine--N-acetylmuramyl-(pentapeptide) pyrophosphoryl-undecaprenol N-acetylglucosamine transferase.